The sequence spans 105 residues: Small ribosomal subunit protein eS24 (105 aa).

The disordered stretch occupies residues 86–105 (LERNKIEADEEADEEAAEEA). A compositionally biased stretch (acidic residues) spans 93–105 (ADEEADEEAAEEA).

Belongs to the eukaryotic ribosomal protein eS24 family.

This Natronomonas pharaonis (strain ATCC 35678 / DSM 2160 / CIP 103997 / JCM 8858 / NBRC 14720 / NCIMB 2260 / Gabara) (Halobacterium pharaonis) protein is Small ribosomal subunit protein eS24.